We begin with the raw amino-acid sequence, 338 residues long: MNELLKSCVNGRTLNEIEAHSIMRDMMTGSLSAAEIGGLLSVLAYRGETAEEITGFVRAMREQAHTIDGPEHVVDTCGTGGDGSSTFNISTAAAIIASSAGAKIAKHGNRSVSSKSGSADVLEYLGVSIQTSPEETIKSIERRNMGFLYAPSYHSSMKHVAGARKDLAFRTVFNLLGPLSNPMKAKRQVIGVYSIEKAKLMARALEAFEPEHVLFVSSRDGLDELSITSPTDVIELKGGKTYEYTVEPGDVGLPLGRLRDIQVATPEESGRLIVDILKNRGPDSAVHIAAFNAGAALYVAEQAADLKEGVALALEAVAGGEALNQLERLKQKEEELYA.

5-phospho-alpha-D-ribose 1-diphosphate contacts are provided by residues Gly78, 81 to 82 (GD), Thr86, 88 to 91 (NIST), 106 to 114 (KHGNRSVSS), and Ser118. Gly78 is a binding site for anthranilate. Ser90 serves as a coordination point for Mg(2+). Residue Asn109 coordinates anthranilate. Position 164 (Arg164) interacts with anthranilate. Mg(2+)-binding residues include Asp223 and Glu224.

Belongs to the anthranilate phosphoribosyltransferase family. As to quaternary structure, homodimer. The cofactor is Mg(2+).

The catalysed reaction is N-(5-phospho-beta-D-ribosyl)anthranilate + diphosphate = 5-phospho-alpha-D-ribose 1-diphosphate + anthranilate. It functions in the pathway amino-acid biosynthesis; L-tryptophan biosynthesis; L-tryptophan from chorismate: step 2/5. Functionally, catalyzes the transfer of the phosphoribosyl group of 5-phosphorylribose-1-pyrophosphate (PRPP) to anthranilate to yield N-(5'-phosphoribosyl)-anthranilate (PRA). The protein is Anthranilate phosphoribosyltransferase of Bacillus licheniformis (strain ATCC 14580 / DSM 13 / JCM 2505 / CCUG 7422 / NBRC 12200 / NCIMB 9375 / NCTC 10341 / NRRL NRS-1264 / Gibson 46).